The following is a 568-amino-acid chain: General O-oligosaccharyltransferase (568 aa).

The next 12 helical transmembrane spans lie at 17–37 (VAVM…LAWL), 46–66 (LTFA…ALFL), 78–98 (LALP…VVDF), 101–121 (ALLS…GYNL), 132–152 (FTLS…IACI), 176–196 (FAQP…CLYL), 214–234 (IVFA…LFFI), 251–271 (YAVL…PRFT), 349–369 (LLVW…LIWI), 376–396 (AKTT…IHTL), 397–417 (LEYP…MGLI), and 429–449 (VPVS…ALIW).

Belongs to the PglL O-oligosaccharyltransferase family.

The protein resides in the cell membrane. Catalyzes the O-glycosylation of multiple protein targets. Is responsible for general protein glycosylation within A.baylyi ADP1. Does not act as an O-antigen ligase. The polypeptide is General O-oligosaccharyltransferase (Acinetobacter baylyi (strain ATCC 33305 / BD413 / ADP1)).